The following is a 202-amino-acid chain: Large ribosomal subunit protein bL25 (202 aa).

The protein belongs to the bacterial ribosomal protein bL25 family. CTC subfamily. Part of the 50S ribosomal subunit; part of the 5S rRNA/L5/L18/L25 subcomplex. Contacts the 5S rRNA. Binds to the 5S rRNA independently of L5 and L18.

Its function is as follows. This is one of the proteins that binds to the 5S RNA in the ribosome where it forms part of the central protuberance. The polypeptide is Large ribosomal subunit protein bL25 (Burkholderia ambifaria (strain MC40-6)).